The primary structure comprises 292 residues: Diaminopimelate epimerase (292 aa).

The substrate site is built by N13, Q46, and N66. The active-site Proton donor is C75. Substrate is bound by residues 76 to 77 (GN), N166, N199, and 217 to 218 (ER). The Proton acceptor role is filled by C226. 227 to 228 (GT) lines the substrate pocket.

It belongs to the diaminopimelate epimerase family. As to quaternary structure, homodimer.

Its subcellular location is the cytoplasm. It carries out the reaction (2S,6S)-2,6-diaminopimelate = meso-2,6-diaminopimelate. It functions in the pathway amino-acid biosynthesis; L-lysine biosynthesis via DAP pathway; DL-2,6-diaminopimelate from LL-2,6-diaminopimelate: step 1/1. Functionally, catalyzes the stereoinversion of LL-2,6-diaminopimelate (L,L-DAP) to meso-diaminopimelate (meso-DAP), a precursor of L-lysine and an essential component of the bacterial peptidoglycan. The chain is Diaminopimelate epimerase from Ralstonia pickettii (strain 12J).